A 198-amino-acid polypeptide reads, in one-letter code: Recombination protein RecR (198 aa).

Residues 57–72 form a C4-type zinc finger; it reads CSLCGNLDTVDPCHIC. In terms of domain architecture, Toprim spans 80 to 175; the sequence is GLICVVETVG…TVTRVGHGVP (96 aa).

This sequence belongs to the RecR family.

Its function is as follows. May play a role in DNA repair. It seems to be involved in an RecBC-independent recombinational process of DNA repair. It may act with RecF and RecO. The protein is Recombination protein RecR of Gluconobacter oxydans (strain 621H) (Gluconobacter suboxydans).